The primary structure comprises 138 residues: Dual specificity phosphatase ibp1 (138 aa).

The Rhodanese domain occupies 19–133; the sequence is SPNEISIIDV…WKRRYGGQQG (115 aa). The active-site Phosphocysteine intermediate is the Cys-70.

The protein belongs to the MPI phosphatase family.

The protein resides in the cytoplasm. The protein localises to the nucleus. It catalyses the reaction O-phospho-L-tyrosyl-[protein] + H2O = L-tyrosyl-[protein] + phosphate. In terms of biological role, may play a role in DNA replication checkpoint via regulation of hsk1 or may act downstream of hsk1 in an S phase regulatory pathway. The polypeptide is Dual specificity phosphatase ibp1 (ibp1) (Schizosaccharomyces pombe (strain 972 / ATCC 24843) (Fission yeast)).